Here is a 79-residue protein sequence, read N- to C-terminus: MPKRILQGVVVSDKNEKTVVVRVERRFAHPLLQKTVRRSKKYKAHDENNQYKVGDTVSIEECAPISKDKTWTVVSAQSK.

Belongs to the universal ribosomal protein uS17 family. As to quaternary structure, part of the 30S ribosomal subunit.

Functionally, one of the primary rRNA binding proteins, it binds specifically to the 5'-end of 16S ribosomal RNA. In Rhizobium rhizogenes (strain K84 / ATCC BAA-868) (Agrobacterium radiobacter), this protein is Small ribosomal subunit protein uS17.